The primary structure comprises 169 residues: 3-hydroxyacyl-[acyl-carrier-protein] dehydratase FabZ (169 aa).

Residue H66 is part of the active site.

This sequence belongs to the thioester dehydratase family. FabZ subfamily.

The protein resides in the cytoplasm. The catalysed reaction is a (3R)-hydroxyacyl-[ACP] = a (2E)-enoyl-[ACP] + H2O. Functionally, involved in unsaturated fatty acids biosynthesis. Catalyzes the dehydration of short chain beta-hydroxyacyl-ACPs and long chain saturated and unsaturated beta-hydroxyacyl-ACPs. The sequence is that of 3-hydroxyacyl-[acyl-carrier-protein] dehydratase FabZ from Helicobacter hepaticus (strain ATCC 51449 / 3B1).